The primary structure comprises 122 residues: MIQQESRLKVADNSGAREILVIKVLGGSYRKTGNIGDVVVATVKQATPGGVVKKADVVKAVIVRTKSGARRADGSYIKFDENAAVIINADKSPRGTRIFGPVARELRDGDFMKIVSLAPEVL.

The protein belongs to the universal ribosomal protein uL14 family. Part of the 50S ribosomal subunit. Forms a cluster with proteins L3 and L19. In the 70S ribosome, L14 and L19 interact and together make contacts with the 16S rRNA in bridges B5 and B8.

Functionally, binds to 23S rRNA. Forms part of two intersubunit bridges in the 70S ribosome. The chain is Large ribosomal subunit protein uL14 from Lacticaseibacillus casei (strain BL23) (Lactobacillus casei).